We begin with the raw amino-acid sequence, 79 residues long: Conotoxin Tr6.3 (79 aa).

Residues 1 to 22 form the signal peptide; sequence MKLTCVLIISVLFLTASQLITA. The propeptide occupies 23 to 47; the sequence is VYSRDKQQYRAARLRDEMRNLKGAR. 3 cysteine pairs are disulfide-bonded: Cys49–Cys62, Cys56–Cys67, and Cys61–Cys77. A 4-hydroxyproline mark is found at Pro60 and Pro63.

Belongs to the conotoxin O1 superfamily. Expressed by the venom duct.

The protein localises to the secreted. In terms of biological role, ion channel inhibitor that inhibits the increase in intracellular calcium upon depolarization in DRG neurons. In vivo, both intraperitoneal and intracranial injections into mice induce hyperactivity. The sequence is that of Conotoxin Tr6.3 from Conus terebra (Sea snail).